A 392-amino-acid polypeptide reads, in one-letter code: DNA-directed RNA polymerase subunit Rpo1C (392 aa).

It belongs to the RNA polymerase beta' chain family. As to quaternary structure, part of the RNA polymerase complex.

The protein resides in the cytoplasm. It catalyses the reaction RNA(n) + a ribonucleoside 5'-triphosphate = RNA(n+1) + diphosphate. Functionally, DNA-dependent RNA polymerase (RNAP) catalyzes the transcription of DNA into RNA using the four ribonucleoside triphosphates as substrates. Forms part of the jaw domain. The polypeptide is DNA-directed RNA polymerase subunit Rpo1C (Sulfurisphaera tokodaii (strain DSM 16993 / JCM 10545 / NBRC 100140 / 7) (Sulfolobus tokodaii)).